A 474-amino-acid chain; its full sequence is Aspartyl/glutamyl-tRNA(Asn/Gln) amidotransferase subunit B (474 aa).

It belongs to the GatB/GatE family. GatB subfamily. In terms of assembly, heterotrimer of A, B and C subunits.

It catalyses the reaction L-glutamyl-tRNA(Gln) + L-glutamine + ATP + H2O = L-glutaminyl-tRNA(Gln) + L-glutamate + ADP + phosphate + H(+). The enzyme catalyses L-aspartyl-tRNA(Asn) + L-glutamine + ATP + H2O = L-asparaginyl-tRNA(Asn) + L-glutamate + ADP + phosphate + 2 H(+). In terms of biological role, allows the formation of correctly charged Asn-tRNA(Asn) or Gln-tRNA(Gln) through the transamidation of misacylated Asp-tRNA(Asn) or Glu-tRNA(Gln) in organisms which lack either or both of asparaginyl-tRNA or glutaminyl-tRNA synthetases. The reaction takes place in the presence of glutamine and ATP through an activated phospho-Asp-tRNA(Asn) or phospho-Glu-tRNA(Gln). In Desulfotalea psychrophila (strain LSv54 / DSM 12343), this protein is Aspartyl/glutamyl-tRNA(Asn/Gln) amidotransferase subunit B.